Here is a 379-residue protein sequence, read N- to C-terminus: Stimulator of interferon genes protein (379 aa).

Residues 1–17 (MPYSNLHPSIPRPRSYR) are Cytoplasmic-facing. The mediates interaction with ZDHHC1 and ZDHHC11 stretch occupies residues 1 to 190 (MPYSNLHPSI…MFNQLHNNML (190 aa)). The chain crosses the membrane as a helical span at residues 18 to 34 (FKLAAFVLLVGSLMSLW). At 35 to 44 (MTGEPPSHTL) the chain is on the lumenal side. Residues 45 to 69 (HYLALHVASQQLGLLLKKLCCLAEE) traverse the membrane as a helical segment. At 70 to 91 (LCHVQSRYQGSYWKAVRACVGS) the chain is on the cytoplasmic side. A lipid anchor (S-palmitoyl cysteine) is attached at Cys88. Residues 92–106 (PICFMALILLSFYFY) traverse the membrane as a helical segment. The Lumenal portion of the chain corresponds to 107–116 (CSLENTSDLR). The helical transmembrane segment at 117–134 (LAWHLGILVLSKSLSMTL) threads the bilayer. Over 135 to 379 (DLQSLAPAEV…QPLPLRTDLI (245 aa)) the chain is Cytoplasmic. Lys151 is covalently cross-linked (Glycyl lysine isopeptide (Lys-Gly) (interchain with G-Cter in ubiquitin)). The tract at residues 153-340 (FNVAHGLAWS…RHIRQEEKEE (188 aa)) is cyclic dinucleotide-binding domain (CBD). 162–167 (SYYIGY) is a 2',3'-cGAMP binding site. Gly166 provides a ligand contact to 3',3'-c-di-GMP. Tyr167 is a 2',3'-cUAMP binding site. Residue Lys236 forms a Glycyl lysine isopeptide (Lys-Gly) (interchain with G-Cter in ubiquitin) linkage. Arg238 provides a ligand contact to 2',3'-cUAMP. Residues 238–241 (RAYS) and Thr263 contribute to the 2',3'-cGAMP site. 3',3'-c-di-GMP is bound by residues 238 to 241 (RAYS) and Thr263. Ser241 is modified (phosphoserine). Residue Thr263 participates in 2',3'-cUAMP binding. Residue Lys338 forms a Glycyl lysine isopeptide (Lys-Gly) (interchain with G-Cter in SUMO) linkage. Positions 340-379 (EVTMSGPPTSVAPRPSLLSQEPRLLISGMEQPLPLRTDLI) are C-terminal tail (CTT). Ser355 bears the Phosphoserine mark. Ser358 and Ser366 each carry phosphoserine; by TBK1. Residues 363–366 (LLIS) carry the pLxIS motif motif.

This sequence belongs to the STING family. In terms of assembly, homodimer; forms a homodimer in absence of cyclic nucleotide (c-di-GMP or cGAMP); 'Lys-63'-linked ubiquitination at Lys-151 is required for homodimerization. Homotetramer; in presence of cyclic nucleotide (c-di-GMP or cGAMP), forms tetramers and higher-order oligomers through side-by-side packing. Interacts (when phosphorylated) with IRF3; following activation and phosphorylation on the pLxIS motif by TBK1, recruits IRF3. Interacts with RIGI, MAVS and SSR2. Interacts with RNF5 and TRIM56. Interacts with TBK1; when homodimer, leading to subsequent production of IFN-beta. Interacts with IFIT1 and IFIT2. Interacts with TRIM29; this interaction induces STING1 ubiquitination and subsequent degradation. Associates with the MHC-II complex. Interacts with STEEP1; interaction takes place upon cGAMP-activation and STING1 phosphorylation by MAP3K7/TAK1 and promotes STING1 translocation to COPII vesicles. Interacts with SEC24A, SEC24B and SEC24C; promoting translocation to COPII vesicles. Interacts (when ubiquitinated) with SQSTM1; leading to relocalization to autophagosomes. Interacts with SURF4. Interacts with HNRNPA2B1. Interacts with ZDHHC1; ZDHHC1 constitutively interacts with STING1 and in presence of DNA viruses activates it by promoting its cGAMP-induced oligomerization and the recruitment of downstream signaling components. Interacts with ZDHHC11; in presence of DNA viruses promotes the recruitment of IRF3 to STING1. Interacts with TOMM70. Interacts with TAB1; promoting recruitment of TAB1 to the endoplasmic reticulum membrane and subsequent activation of MAP3K7/TAK1. Interacts (via transmembrane domain) with TMEM203. Interacts with DDX41. Phosphorylation by TBK1 leads to activation and production of IFN-beta. Following cyclic nucleotide (c-di-GMP or cGAMP)-binding, activation and translocation from the endoplasmic reticulum, STING1 is phosphorylated by TBK1 at Ser-366 in the pLxIS motif. The phosphorylated pLxIS motif constitutes an IRF3-binding motif, leading to recruitment of the transcription factor IRF3 to induce type-I interferons and other cytokines. Phosphorylated on tyrosine residues upon MHC-II aggregation. Dephosphorylation by PPP6C leads to inactivation and decreased production of IFN-beta. Phosphorylation at Ser-358 is also required to activate IRF3. Phosphorylation at Ser-355 by MAP3K7/TAK1 facilitates its interaction with STEEP1, promoting STING1 translocation to COPII vesicles. Post-translationally, ubiquitinated. Ubiquitinated via 'Lys-63'-linked ubiquitin chains in response to double-stranded DNA treatment, leading to relocalization to autophagosomes and subsequent degradation; this process is dependent on SQSTM1. 'Lys-63'-linked ubiquitination mediated by TRIM56 at Lys-151 promotes homodimerization and recruitment of the antiviral kinase TBK1 and subsequent production of IFN-beta. 'Lys-48'-linked polyubiquitination at Lys-151 occurring after viral infection is mediated by RNF5 and leads to proteasomal degradation. 'Lys-11'-linked polyubiquitination at Lys-151 by RNF26 leads to stabilize STING1: it protects STING1 from RNF5-mediated 'Lys-48'-linked polyubiquitination. 'Lys-33'-linked and 'Lys-48'-linked deubiquitinated by USP20; leading to its stabilization and promotion of innate antiviral response. 'Lys-48'-linked deubiquitinated by USP44; leading to its stabilization and promotion of innate antiviral response. Deubiquitinated by USP13; leading to inhibition of innate antiviral response. 'Lys-63'-linked deubiquitinated by USP49; leading to inhibition of the subsequent recruitment of TBK1 to the signaling complex. 'Lys-63'-linked ubiquitination mediated by RNF39 promotes the activation of the cGAS-STING pathway. In terms of processing, sumoylated at Lys-338 by TRIM38 during the early phase of viral infection, promoting its stability by preventing its relocalization to autophagosomes and subsequent degradation. Desumoylated by SENP2 during the late phase of viral infection. Palmitoylation takes place in the Golgi apparatus and creates a platform for the recruitment of TBK1.

It localises to the endoplasmic reticulum membrane. It is found in the cytoplasm. The protein localises to the perinuclear region. The protein resides in the endoplasmic reticulum-Golgi intermediate compartment membrane. Its subcellular location is the golgi apparatus membrane. It localises to the cytoplasmic vesicle. It is found in the autophagosome membrane. The protein localises to the mitochondrion outer membrane. The protein resides in the cell membrane. The enzyme catalyses H(+)(in) = H(+)(out). With respect to regulation, in contrast to mouse protein, not activated by anticancer molecule 5,6-dimethylxanthenone 4-acetic acid (DMXAA). Its function is as follows. Facilitator of innate immune signaling that acts as a sensor of cytosolic DNA from bacteria and viruses and promotes the production of type I interferon (IFN-alpha and IFN-beta). Innate immune response is triggered in response to non-CpG double-stranded DNA from viruses and bacteria delivered to the cytoplasm. Acts by binding cyclic dinucleotides: recognizes and binds cyclic di-GMP (c-di-GMP), a second messenger produced by bacteria, cyclic UMP-AMP (2',3'-cUAMP), and cyclic GMP-AMP (cGAMP), a messenger produced by CGAS in response to DNA virus in the cytosol. Upon binding to c-di-GMP, cUAMP or cGAMP, STING1 oligomerizes, translocates from the endoplasmic reticulum and is phosphorylated by TBK1 on the pLxIS motif, leading to recruitment and subsequent activation of the transcription factor IRF3 to induce expression of type I interferon and exert a potent anti-viral state. Exhibits 2',3' phosphodiester linkage-specific ligand recognition: can bind both 2'-3' linked cGAMP (2'-3'-cGAMP) and 3'-3' linked cGAMP but is preferentially activated by 2'-3' linked cGAMP. The preference for 2'-3'-cGAMP, compared to other linkage isomers is probably due to the ligand itself, whichs adopts an organized free-ligand conformation that resembles the STING1-bound conformation and pays low energy costs in changing into the active conformation. In addition to promote the production of type I interferons, plays a direct role in autophagy. Following cGAMP-binding, STING1 buds from the endoplasmic reticulum into COPII vesicles, which then form the endoplasmic reticulum-Golgi intermediate compartment (ERGIC). The ERGIC serves as the membrane source for WIPI2 recruitment and LC3 lipidation, leading to formation of autophagosomes that target cytosolic DNA or DNA viruses for degradation by the lysosome. Promotes autophagy by acting as a proton channel that directs proton efflux from the Golgi to facilitate MAP1LC3B/LC3B lipidation. The autophagy- and interferon-inducing activities can be uncoupled and autophagy induction is independent of TBK1 phosphorylation. Autophagy is also triggered upon infection by bacteria: following c-di-GMP-binding, which is produced by live Gram-positive bacteria, promotes reticulophagy. May be involved in translocon function, the translocon possibly being able to influence the induction of type I interferons. May be involved in transduction of apoptotic signals via its association with the major histocompatibility complex class II (MHC-II). This chain is Stimulator of interferon genes protein, found in Rattus norvegicus (Rat).